The chain runs to 842 residues: Xyloglucanase Xgh74A (842 aa).

The signal sequence occupies residues 1–32 (MVKKFTSKIKAAVFAAVVAATAIFGPAISSQA). Residue Asp-70 is the Nucleophile of the active site. BNR repeat units lie at residues 134 to 144 (RSTDRGETWEK), 185 to 196 (WRSTDYGVTWSK), 252 to 262 (YRSTDGGVTWK), and 358 to 368 (FRSTDGGATWK). Asp-480 (proton donor) is an active-site residue. BNR repeat units follow at residues 533-541 (FSYDGGRNW), 577-586 (VTTDNGNSWK), 616-626 (YISTDGGLTFT), 660-671 (WRSTDGGYTFEK), and 708-718 (FRSDDAGKTWV). The 71-residue stretch at 771–841 (DKGLVGDLNG…LLQAIPELPK (71 aa)) folds into the Dockerin domain.

Belongs to the glycosyl hydrolase 74 family.

In terms of biological role, hydrolyzes the glucosidic bonds of unbranched Glc residues in tamarind seed xyloglucan, producing XXXG, XLXG, XXLG and XLLG. Has low activity on carboxymethylcellulose, lichenan,hydroxyethylcellulose and glucuronoxylan, and no activity on xylan, polygalaturonic acid, wheat arabinoxylan, rhamnogalacturan, curdlan, laminarin, galactomannan, galactan, arabinan and pachyman or amorphous cellulose. The polypeptide is Xyloglucanase Xgh74A (Acetivibrio thermocellus (strain ATCC 27405 / DSM 1237 / JCM 9322 / NBRC 103400 / NCIMB 10682 / NRRL B-4536 / VPI 7372) (Clostridium thermocellum)).